Here is a 573-residue protein sequence, read N- to C-terminus: Kinesin light chain 1 (573 aa).

The stretch at 27 to 156 forms a coiled coil; it reads KTKQVIQGLE…HLEFMNQLKK (130 aa). The span at 155–176 shows a compositional bias: basic and acidic residues; the sequence is KKYDDDISPSEDKDTDSTKEPL. The interval 155 to 203 is disordered; that stretch reads KKYDDDISPSEDKDTDSTKEPLDDLFPNDEDDPGQGIQQQHSSAAAAAQ. The residue at position 162 (S162) is a Phosphoserine. Over residues 188 to 203 the composition is skewed to low complexity; it reads GQGIQQQHSSAAAAAQ. 5 TPR repeats span residues 213-246, 255-288, 297-330, 339-372, and 381-414; these read LRTLHNLVIQYASQGRYEVAVPLCKQALEDLEKT, ATMLNILALVYRDQNKYKDAANLLNDALAIREKT, AATLNNLAVLYGKRGKYKEAEPLCKRALEIREKV, AKQLNNLALLCQNQGKYEEVEYYYQRALEIYQTK, and AKTKNNLASCYLKQGKFKQAETLYKEILTRAHER. Y449 is modified (phosphotyrosine). S460 is subject to Phosphoserine. The TPR 6 repeat unit spans residues 464 to 497; it reads TTTLKNLGALYRRQGKFEAAETLEEAAMRSRKQG. Phosphoserine; by AMPK occurs at positions 521 and 524. Position 547 is a phosphoserine (E547). The tract at residues 553 to 573 is disordered; the sequence is SGRASFCGKRQQQQWPGRRHR.

This sequence belongs to the kinesin light chain family. As to quaternary structure, oligomeric complex composed of two heavy chains and two light chains. Interacts with SPAG9. Interacts with ATCAY; may link mitochondria to KLC1 and regulate mitochondria localization into neuron projections. Interacts (via TPR repeats) with TOR1A; the interaction associates TOR1A with the kinesin oligomeric complex. Interacts with BORCS5. Interacts with MAPK8IP3/JIP3 and NTRK2/TRKB; interaction with NTRK2/TRKB is mediated by MAPK8IP3/JIP3. Interacts with CLSTN1; phosphorylation at Ser-460 inhibits interaction with CLSTN1. (Microbial infection) Interacts with adenovirus hexon-interlacing protein; this interaction leads to capsid disruption at the nuclear pore complex during virus entry into host cell. Post-translationally, phosphorylation at Ser-460 by ERK inhibits interaction with CLSTN1 and localization to cytoplasmic vesicles. In terms of tissue distribution, found in a variety of tissues. Mostly abundant in brain and spine.

It is found in the cell projection. The protein localises to the growth cone. It localises to the cytoplasmic vesicle. The protein resides in the cytoplasm. Its subcellular location is the cytoskeleton. Kinesin is a microtubule-associated force-producing protein that may play a role in organelle transport. The light chain may function in coupling of cargo to the heavy chain or in the modulation of its ATPase activity. The polypeptide is Kinesin light chain 1 (KLC1) (Homo sapiens (Human)).